Consider the following 386-residue polypeptide: Zinc finger CCCH domain-containing protein 2 (386 aa).

2 consecutive C3H1-type zinc fingers follow at residues 116 to 143 and 151 to 175; these read HYSGTACPDFRKGGCKRGDACEYAHGVF and RYRTQPCKDGTACRRRVCFFAHTPD. Disordered stretches follow at residues 180–200 and 220–252; these read LPAQQSSPRSVASSPLAESYD and SSPTSTLMSPPKSPPSESPPLSPDGAAAIRRGS. The span at 182-192 shows a compositional bias: polar residues; sequence AQQSSPRSVAS. The segment covering 220–229 has biased composition (low complexity); that stretch reads SSPTSTLMSP. The span at 230–241 shows a compositional bias: pro residues; the sequence is PKSPPSESPPLS.

It is found in the nucleus. Its function is as follows. Involved in leaf senescence delay. May repress jasmonic acid (JA) signaling role in promoting leaf senescence. May regulate panicle development and pollination/fertilization process. This chain is Zinc finger CCCH domain-containing protein 2, found in Oryza sativa subsp. japonica (Rice).